The chain runs to 321 residues: Probable proline iminopeptidase (321 aa).

One can recognise an AB hydrolase-1 domain in the interval 35–296 (KPVVFLHGGP…IVVPDAGHSM (262 aa)). Ser-110 serves as the catalytic Nucleophile. Residue Asp-266 is part of the active site. Residue His-294 is the Proton donor of the active site.

Belongs to the peptidase S33 family.

The protein resides in the cytoplasm. The catalysed reaction is Release of N-terminal proline from a peptide.. Specifically catalyzes the removal of N-terminal proline residues from peptides. The polypeptide is Probable proline iminopeptidase (pip) (Leptolyngbya boryana (Plectonema boryanum)).